The following is a 336-amino-acid chain: Foldase protein PrsA (336 aa).

Residues 1 to 22 (MKSAKKLLSVLCLGIFILTFTA) form the signal peptide. The N-palmitoyl cysteine moiety is linked to residue Cys-23. Cys-23 carries S-diacylglycerol cysteine lipidation. The region spanning 194-286 (PNTMNVSHIL…FGYHIIKINS (93 aa)) is the PpiC domain.

This sequence belongs to the PrsA family.

The protein localises to the cell membrane. It carries out the reaction [protein]-peptidylproline (omega=180) = [protein]-peptidylproline (omega=0). Its function is as follows. Plays a major role in protein secretion by helping the post-translocational extracellular folding of several secreted proteins. This chain is Foldase protein PrsA, found in Clostridium botulinum (strain Okra / Type B1).